Reading from the N-terminus, the 331-residue chain is Elongation factor Ts, mitochondrial (331 aa).

Residues 254–295 form a disordered region; the sequence is SPLTVGEMPEVREEEGEKKDGDKQDEEERSTDSDEDETQMLR. Basic and acidic residues predominate over residues 262–275; the sequence is PEVREEEGEKKDGD. Acidic residues predominate over residues 276 to 291; that stretch reads KQDEEERSTDSDEDET.

The protein belongs to the EF-Ts family.

It localises to the mitochondrion. In terms of biological role, associates with the EF-Tu.GDP complex and induces the exchange of GDP to GTP. It remains bound to the aminoacyl-tRNA.EF-Tu.GTP complex up to the GTP hydrolysis stage on the ribosome. This chain is Elongation factor Ts, mitochondrial, found in Branchiostoma floridae (Florida lancelet).